Consider the following 285-residue polypeptide: NADPH-dependent 7-cyano-7-deazaguanine reductase (285 aa).

91 to 93 is a binding site for substrate; the sequence is IES. Residue 93 to 94 participates in NADPH binding; that stretch reads SK. Catalysis depends on Cys-193, which acts as the Thioimide intermediate. Asp-200 functions as the Proton donor in the catalytic mechanism. Substrate is bound at residue 232-233; it reads HE. 261–262 serves as a coordination point for NADPH; that stretch reads RG.

Belongs to the GTP cyclohydrolase I family. QueF type 2 subfamily. In terms of assembly, homodimer.

It localises to the cytoplasm. The catalysed reaction is 7-aminomethyl-7-carbaguanine + 2 NADP(+) = 7-cyano-7-deazaguanine + 2 NADPH + 3 H(+). It participates in tRNA modification; tRNA-queuosine biosynthesis. Its function is as follows. Catalyzes the NADPH-dependent reduction of 7-cyano-7-deazaguanine (preQ0) to 7-aminomethyl-7-deazaguanine (preQ1). The polypeptide is NADPH-dependent 7-cyano-7-deazaguanine reductase (Shewanella baltica (strain OS223)).